Here is a 403-residue protein sequence, read N- to C-terminus: Flagellar hook protein FlgE (403 aa).

It belongs to the flagella basal body rod proteins family.

It is found in the bacterial flagellum basal body. In Salmonella typhi, this protein is Flagellar hook protein FlgE (flgE).